The following is a 932-amino-acid chain: MSLQTLPSDAADSRPNRPEDVQALEADARLRDDIRLLGRILGDTVRDQEGADLFDLVERIRQTSIRFHRDEDRLARRELEQILDSMSTSETVRIVRAFSYFSHLANIAEDQNNIRQMRARTAAKIGGSGVLADTLAHAKAAGIGPDALRNFFKTALVSPVLTAHPTEVRRKSTMDREMEVASLLDRRERVALTEDEAAASDEQLRREVLTLWQTNLLRRTKLTVLDEVANGLSFYDYTFLREVPRLVNVLEDRLEEDGDQAASELASFLRMGSWIGGDRDGNPFVTADVMRGTLRLQSSRVMQFYLNELHVLGSELSIAAHLADVSEELRTLAERSPDTSPHRSGEPYRLAVSGIYARLTATAEALEVEITRRPVGKGRPYESVKELQADLDVLHRSLISNNARVIARGRLRLLRRAVDCFGFHLARLDIRQNSAVHERTIAELMDAANPGMSYLALGEDARISLLTNELRSTRALVSPFVKYSDETMGELNVFHAAAEAHAKFGSDAIPQCIISMCKGMSDMLEVAVLLKEVGLVHPSGRSAINIVPLFETIEDLQASSAIMDRMLSLHDYRRLVDSRGSVQEVMLGYSDSNKDGGFVTSGWELYKAEINLVDVFERHHVRLRLFHGRGGSVGRGGGPSYDAIIAQPGGAVNGQIRITEQGEIISSKYSNAEVGRNNLEILAAATLEASLLHPRQSAPRREYLTAMDELSSLAFRAYRGLVYETDGFVDYFWASTVINEIATLNIGSRPASRKKTRAIEDLRAIPWVFSWAQCRLMLPGWYGFGTAVEQWIAEHPDKGMPFLKELYKEWPFFRMLLSNMDMVLAKSSIAIASRYAELVPDEALREKIFGRIRREWHSCIETLLDIMGQDRLLQGNPLLERSVRHRFPYLDPLNHVQVELLREHRAQNPDEQVLRGIQLTINGISAGLRNTG.

Active-site residues include histidine 164 and lysine 594.

The protein belongs to the PEPCase type 1 family. It depends on Mg(2+) as a cofactor.

It catalyses the reaction oxaloacetate + phosphate = phosphoenolpyruvate + hydrogencarbonate. Its function is as follows. Forms oxaloacetate, a four-carbon dicarboxylic acid source for the tricarboxylic acid cycle. The chain is Phosphoenolpyruvate carboxylase from Bradyrhizobium diazoefficiens (strain JCM 10833 / BCRC 13528 / IAM 13628 / NBRC 14792 / USDA 110).